Reading from the N-terminus, the 234-residue chain is Uridylate kinase (234 aa).

9 to 12 (KLSG) is an ATP binding site. A UMP-binding site is contributed by G51. Positions 52 and 56 each coordinate ATP. Residues D71 and 132 to 139 (CGNPFFTT) contribute to the UMP site. Residues T159, Y165, and D168 each contribute to the ATP site.

This sequence belongs to the UMP kinase family. Homohexamer.

It localises to the cytoplasm. The catalysed reaction is UMP + ATP = UDP + ADP. It functions in the pathway pyrimidine metabolism; CTP biosynthesis via de novo pathway; UDP from UMP (UMPK route): step 1/1. With respect to regulation, inhibited by UTP. Catalyzes the reversible phosphorylation of UMP to UDP. The polypeptide is Uridylate kinase (Prochlorococcus marinus (strain MIT 9215)).